Reading from the N-terminus, the 458-residue chain is Exodeoxyribonuclease 7 large subunit (458 aa).

This sequence belongs to the XseA family. Heterooligomer composed of large and small subunits.

Its subcellular location is the cytoplasm. The enzyme catalyses Exonucleolytic cleavage in either 5'- to 3'- or 3'- to 5'-direction to yield nucleoside 5'-phosphates.. Functionally, bidirectionally degrades single-stranded DNA into large acid-insoluble oligonucleotides, which are then degraded further into small acid-soluble oligonucleotides. In Escherichia coli (strain UTI89 / UPEC), this protein is Exodeoxyribonuclease 7 large subunit.